The following is an 89-amino-acid chain: Small ribosomal subunit protein bS20 (89 aa).

Belongs to the bacterial ribosomal protein bS20 family.

Its function is as follows. Binds directly to 16S ribosomal RNA. This chain is Small ribosomal subunit protein bS20, found in Helicobacter pylori (strain Shi470).